Here is a 375-residue protein sequence, read N- to C-terminus: Kininogen (375 aa).

The first 23 residues, 1 to 23 (MKLGVRLCVLVVFSLQLWGPGQG), serve as a signal peptide directing secretion. 2 consecutive Cystatin kininogen-type domains span residues 35-139 (CDDK…VEAP) and 156-260 (VESE…GPLD). The N-linked (GlcNAc) asparagine glycan is linked to asparagine 74. 4 cysteine pairs are disulfide-bonded: cysteine 91–cysteine 102, cysteine 115–cysteine 133, cysteine 211–cysteine 223, and cysteine 234–cysteine 254. Asparagine 235 is a glycosylation site (N-linked (GlcNAc) asparagine). The disordered stretch occupies residues 283 to 375 (EVKTTQASTA…LSDLDLLGKK (93 aa)).

Post-translationally, N-glycosylated, with sialylated biantennary complex-type glycans. In terms of processing, O-glycosylated, sialylated oligosaccharides. Bradykinin is released from kininogen by kallikrein. Post-translationally, the N-terminus is blocked. Expressed in the skin, liver, intestine, spleen, pancreas and kidney.

The protein localises to the cytoplasm. Its subcellular location is the vacuole. Inhibits papain and ficin (cysteine proteinases) but not trypsin (a serine proteinase). This chain is Kininogen (LOC106584303), found in Salmo salar (Atlantic salmon).